The primary structure comprises 391 residues: PPE family protein PPE15 (391 aa).

The interval 312–367 (LGEATLVGRLSVPAAWSTAAPATTAGATALEGSGWTVAAEEAGPVTGMMPGMASAA) is eukaryotic-like SH3 domain.

This sequence belongs to the mycobacterial PPE family. Forms a heterodimer with PE8. The dimer forms a 1:1:1 heterotrimeric complex with EspG5. PPE15 interacts directly with EspG5. Interacts via the C-terminal region with host Toll-like receptor 4 (TLR4). Interacts, also via the C-terminal region, with two cytosolic subunits of the host NOX complex, p47phox (NCF1) and p67phox (NCF2).

It localises to the secreted. Its subcellular location is the host mitochondrion. In terms of biological role, may play a critical role in the homeostasis of triacylglycerol-containing lipid droplets in M.tuberculosis and influence the entry of the pathogen into a dormant state. Is recognized by host TLR4 receptor at the macrophage cell surface, which modulates the host immune response, induces mitochondrial stress and perturbations, and induces macrophage apoptosis leading to pathogen persistence. Also downregulates NOX-mediated reactive oxygen species (ROS) generation in THP1 macrophages, which increases intracellular survival of bacteria. PPE15 interacts with two subunits of the host NADPH oxidase (NOX) complex in the cytosol of macrophages and prevents their migration to the membrane, which inhibits the assembly of the NOX complex at the plasma membrane of THP1 macrophages. This leads to reduced NOX activity and diminished ROS generation. The protein is PPE family protein PPE15 (PPE15) of Mycobacterium tuberculosis (strain CDC 1551 / Oshkosh).